The primary structure comprises 265 residues: 3-methyl-2-oxobutanoate hydroxymethyltransferase (265 aa).

Positions 46 and 85 each coordinate Mg(2+). 3-methyl-2-oxobutanoate contacts are provided by residues 46–47 (DS), D85, and K114. E116 serves as a coordination point for Mg(2+). The active-site Proton acceptor is E183.

This sequence belongs to the PanB family. In terms of assembly, homodecamer; pentamer of dimers. The cofactor is Mg(2+).

Its subcellular location is the cytoplasm. The enzyme catalyses 3-methyl-2-oxobutanoate + (6R)-5,10-methylene-5,6,7,8-tetrahydrofolate + H2O = 2-dehydropantoate + (6S)-5,6,7,8-tetrahydrofolate. Its pathway is cofactor biosynthesis; coenzyme A biosynthesis. Its function is as follows. Catalyzes the reversible reaction in which hydroxymethyl group from 5,10-methylenetetrahydrofolate is transferred onto alpha-ketoisovalerate to form ketopantoate. The polypeptide is 3-methyl-2-oxobutanoate hydroxymethyltransferase (Pyrobaculum calidifontis (strain DSM 21063 / JCM 11548 / VA1)).